The sequence spans 560 residues: Exonuclease subunit 2 (560 aa).

An ATP-binding site is contributed by 36–43 (GRNGGGKS).

The protein to phage T5 protein D13 and to yeast RAD52. In terms of assembly, consists of two subunits: gp46 and gp47.

In terms of biological role, exonuclease that plays a role in viral genome replication, DNA recombination, and host DNA degradation. This is Exonuclease subunit 2 (46) from Enterobacteria phage T4 (Bacteriophage T4).